Consider the following 179-residue polypeptide: Large ribosomal subunit protein uL5 (179 aa).

This sequence belongs to the universal ribosomal protein uL5 family. As to quaternary structure, part of the 50S ribosomal subunit; part of the 5S rRNA/L5/L18/L25 subcomplex. Contacts the 5S rRNA and the P site tRNA. Forms a bridge to the 30S subunit in the 70S ribosome.

Functionally, this is one of the proteins that bind and probably mediate the attachment of the 5S RNA into the large ribosomal subunit, where it forms part of the central protuberance. In the 70S ribosome it contacts protein S13 of the 30S subunit (bridge B1b), connecting the 2 subunits; this bridge is implicated in subunit movement. Contacts the P site tRNA; the 5S rRNA and some of its associated proteins might help stabilize positioning of ribosome-bound tRNAs. This chain is Large ribosomal subunit protein uL5, found in Xylella fastidiosa (strain M12).